A 182-amino-acid polypeptide reads, in one-letter code: Crossover junction endodeoxyribonuclease RuvC (182 aa).

Catalysis depends on residues D7, E69, and D141. Residues D7, E69, and D141 each coordinate Mg(2+).

The protein belongs to the RuvC family. As to quaternary structure, homodimer which binds Holliday junction (HJ) DNA. The HJ becomes 2-fold symmetrical on binding to RuvC with unstacked arms; it has a different conformation from HJ DNA in complex with RuvA. In the full resolvosome a probable DNA-RuvA(4)-RuvB(12)-RuvC(2) complex forms which resolves the HJ. The cofactor is Mg(2+).

The protein localises to the cytoplasm. The catalysed reaction is Endonucleolytic cleavage at a junction such as a reciprocal single-stranded crossover between two homologous DNA duplexes (Holliday junction).. In terms of biological role, the RuvA-RuvB-RuvC complex processes Holliday junction (HJ) DNA during genetic recombination and DNA repair. Endonuclease that resolves HJ intermediates. Cleaves cruciform DNA by making single-stranded nicks across the HJ at symmetrical positions within the homologous arms, yielding a 5'-phosphate and a 3'-hydroxyl group; requires a central core of homology in the junction. The consensus cleavage sequence is 5'-(A/T)TT(C/G)-3'. Cleavage occurs on the 3'-side of the TT dinucleotide at the point of strand exchange. HJ branch migration catalyzed by RuvA-RuvB allows RuvC to scan DNA until it finds its consensus sequence, where it cleaves and resolves the cruciform DNA. This chain is Crossover junction endodeoxyribonuclease RuvC, found in Delftia acidovorans (strain DSM 14801 / SPH-1).